An 83-amino-acid polypeptide reads, in one-letter code: Small ribosomal subunit protein bS16 (83 aa).

It belongs to the bacterial ribosomal protein bS16 family.

This chain is Small ribosomal subunit protein bS16, found in Pseudomonas entomophila (strain L48).